Consider the following 874-residue polypeptide: Probable inorganic carbon transporter subunit DabA (874 aa).

Residues cysteine 398, aspartate 400, histidine 580, and cysteine 595 each coordinate Zn(2+).

The protein belongs to the inorganic carbon transporter (TC 9.A.2) DabA family. As to quaternary structure, forms a complex with DabB. Requires Zn(2+) as cofactor.

Its subcellular location is the cell membrane. Part of an energy-coupled inorganic carbon pump. The sequence is that of Probable inorganic carbon transporter subunit DabA from Bacillus cereus (strain 03BB102).